The sequence spans 200 residues: Transgelin (200 aa).

Ala-2 bears the N-acetylalanine mark. Residues 24–137 form the Calponin-homology (CH) domain; sequence DELEDRLVEW…RTLVALGSLA (114 aa). The Calponin-like repeat unit spans residues 175 to 199; it reads IGLQMGTNKGASQAGMSYGRPRQII.

It belongs to the calponin family. In terms of assembly, monomer. Gizzard, uterus, intestine, esophagus, aorta, and trace amounts in brain, liver and heart.

The protein localises to the cytoplasm. Its function is as follows. Actin cross-linking/gelling protein. In Gallus gallus (Chicken), this protein is Transgelin (TAGLN).